Reading from the N-terminus, the 457-residue chain is Siroheme synthase (457 aa).

Residues 1–204 are precorrin-2 dehydrogenase /sirohydrochlorin ferrochelatase; it reads MDHLPIFCQL…NDQKAITETT (204 aa). Residues 22 to 23 and 43 to 44 contribute to the NAD(+) site; these read DV and LA. S128 is subject to Phosphoserine. Positions 216–457 are uroporphyrinogen-III C-methyltransferase; it reads GEVVLVGAGP…RDKLNWFSNH (242 aa). P225 is a binding site for S-adenosyl-L-methionine. D248 acts as the Proton acceptor in catalysis. Residue K270 is the Proton donor of the active site. S-adenosyl-L-methionine contacts are provided by residues 301-303, I306, 331-332, M382, and G411; these read GGD and TA.

The protein in the N-terminal section; belongs to the precorrin-2 dehydrogenase / sirohydrochlorin ferrochelatase family. This sequence in the C-terminal section; belongs to the precorrin methyltransferase family.

It catalyses the reaction uroporphyrinogen III + 2 S-adenosyl-L-methionine = precorrin-2 + 2 S-adenosyl-L-homocysteine + H(+). It carries out the reaction precorrin-2 + NAD(+) = sirohydrochlorin + NADH + 2 H(+). The catalysed reaction is siroheme + 2 H(+) = sirohydrochlorin + Fe(2+). It participates in cofactor biosynthesis; adenosylcobalamin biosynthesis; precorrin-2 from uroporphyrinogen III: step 1/1. The protein operates within cofactor biosynthesis; adenosylcobalamin biosynthesis; sirohydrochlorin from precorrin-2: step 1/1. Its pathway is porphyrin-containing compound metabolism; siroheme biosynthesis; precorrin-2 from uroporphyrinogen III: step 1/1. It functions in the pathway porphyrin-containing compound metabolism; siroheme biosynthesis; siroheme from sirohydrochlorin: step 1/1. It participates in porphyrin-containing compound metabolism; siroheme biosynthesis; sirohydrochlorin from precorrin-2: step 1/1. Multifunctional enzyme that catalyzes the SAM-dependent methylations of uroporphyrinogen III at position C-2 and C-7 to form precorrin-2 via precorrin-1. Then it catalyzes the NAD-dependent ring dehydrogenation of precorrin-2 to yield sirohydrochlorin. Finally, it catalyzes the ferrochelation of sirohydrochlorin to yield siroheme. The polypeptide is Siroheme synthase (Escherichia coli O6:H1 (strain CFT073 / ATCC 700928 / UPEC)).